Consider the following 581-residue polypeptide: Ezrin (581 aa).

In terms of domain architecture, FERM spans 2–295 (PKPINVRVTT…GNHELYMRRR (294 aa)). At lysine 60 the chain carries N6-acetyllysine. The [IL]-x-C-x-x-[DE] motif motif lies at 115–120 (IYCPPE). Residue tyrosine 146 is modified to Phosphotyrosine; by PDGFR. Positions 244–581 (EIRNISFNDK…KQRIDEFEAM (338 aa)) are interaction with SCYL3. Positions 302–462 (VQQMKAQARE…QDDLVKTREE (161 aa)) form a coiled coil. The tract at residues 306 to 341 (KAQAREEKHQKQLERQQLETEKKRRETVEREKEQMM) is disordered. A compositionally biased stretch (basic and acidic residues) spans 308-341 (QAREEKHQKQLERQQLETEKKRRETVEREKEQMM). Tyrosine 354 is modified (phosphotyrosine; by PDGFR). The residue at position 366 (serine 366) is a Phosphoserine. Position 476 is a phosphotyrosine (tyrosine 476). The interval 534–560 (SQARDENKRTHNDIIHNENMRQGRDKY) is disordered. A compositionally biased stretch (basic and acidic residues) spans 535 to 560 (QARDENKRTHNDIIHNENMRQGRDKY). Threonine 562 carries the post-translational modification Phosphothreonine; by ROCK2 and PKC/PRKCI.

Interacts with PALS1 and NHERF2. Found in a complex with EZR, PODXL and NHERF2. Interacts with MCC, PLEKHG6, PODXL, SCYL3/PACE1, NHERF1 and TMEM8B. Interacts (when phosphorylated) with FES/FPS. Interacts with dimeric S100P, the interaction may be activating through unmasking of F-actin binding sites. Identified in complexes that contain VIM, EZR, AHNAK, BFSP1, BFSP2, ANK2, PLEC, PRX and spectrin. Detected in a complex composed of at least EZR, AHNAK, PPL and PRX. Interacts with PDPN (via cytoplasmic domain); activates RHOA and promotes epithelial-mesenchymal transition. Interacts with SPN/CD43 cytoplasmic tail, CD44 and ICAM2. Interacts with SLC9A3; interaction targets SLC9A3 to the apical membrane. Interacts with SLC9A1; regulates interactions of SLC9A1 with cytoskeletal and promotes stress fiber formation. Interacts with CLIC5; may work together in a complex which also includes RDX and MYO6 to stabilize linkages between the plasma membrane and subjacent actin cytoskeleton at the base of stereocilia. In terms of processing, phosphorylated by tyrosine-protein kinases. Phosphorylation by ROCK2 suppresses the head-to-tail association of the N-terminal and C-terminal halves resulting in an opened conformation which is capable of actin and membrane-binding. Post-translationally, S-nitrosylation is induced by interferon-gamma and oxidatively-modified low-densitity lipoprotein (LDL(ox)) possibly implicating the iNOS-S100A8/9 transnitrosylase complex. As to expression, detected in eye lens fiber cells (at protein level).

It localises to the apical cell membrane. Its subcellular location is the cell projection. The protein resides in the microvillus membrane. The protein localises to the ruffle membrane. It is found in the cytoplasm. It localises to the cell cortex. Its subcellular location is the cytoskeleton. The protein resides in the microvillus. A head-to-tail association, of the N-terminal and C-terminal halves results in a closed conformation (inactive form) which is incapable of actin or membrane-binding. Probably involved in connections of major cytoskeletal structures to the plasma membrane. In epithelial cells, required for the formation of microvilli and membrane ruffles on the apical pole. Along with PLEKHG6, required for normal macropinocytosis. In Bos taurus (Bovine), this protein is Ezrin (EZR).